The sequence spans 397 residues: Succinate--CoA ligase [ADP-forming] subunit beta (397 aa).

The 246-residue stretch at 9 to 254 (KALLRSYGAP…ETEEDPKELA (246 aa)) folds into the ATP-grasp domain. Residues lysine 46, 53–55 (GRG), glutamate 109, serine 112, and glutamate 117 each bind ATP. Mg(2+)-binding residues include asparagine 209 and aspartate 223. Substrate-binding positions include asparagine 274 and 331–333 (GIM).

Belongs to the succinate/malate CoA ligase beta subunit family. Heterotetramer of two alpha and two beta subunits. Mg(2+) is required as a cofactor.

It carries out the reaction succinate + ATP + CoA = succinyl-CoA + ADP + phosphate. The enzyme catalyses GTP + succinate + CoA = succinyl-CoA + GDP + phosphate. The protein operates within carbohydrate metabolism; tricarboxylic acid cycle; succinate from succinyl-CoA (ligase route): step 1/1. Succinyl-CoA synthetase functions in the citric acid cycle (TCA), coupling the hydrolysis of succinyl-CoA to the synthesis of either ATP or GTP and thus represents the only step of substrate-level phosphorylation in the TCA. The beta subunit provides nucleotide specificity of the enzyme and binds the substrate succinate, while the binding sites for coenzyme A and phosphate are found in the alpha subunit. The sequence is that of Succinate--CoA ligase [ADP-forming] subunit beta from Cereibacter sphaeroides (strain ATCC 17029 / ATH 2.4.9) (Rhodobacter sphaeroides).